Consider the following 163-residue polypeptide: MSQQEEMKNLTLLGSKETPYIFEYSPQVLESFDNRHADNDYFIKFNCPEFTSLCPITGQPDFASIYISYIPDQLCVESKSLKLYLFSYRNHGDFHENCINTIGKDLVELLNPRYLEVWGKFTPRGGISIDPYYNYGRPKTKYENMAEQRLFNHDLYPENIDNR.

The Thioimide intermediate role is filled by Cys-54. Residue Asp-61 is the Proton donor of the active site. Substrate is bound by residues 76–78 (VES) and 95–96 (HE).

It belongs to the GTP cyclohydrolase I family. QueF type 1 subfamily.

The protein localises to the cytoplasm. It carries out the reaction 7-aminomethyl-7-carbaguanine + 2 NADP(+) = 7-cyano-7-deazaguanine + 2 NADPH + 3 H(+). It participates in tRNA modification; tRNA-queuosine biosynthesis. Functionally, catalyzes the NADPH-dependent reduction of 7-cyano-7-deazaguanine (preQ0) to 7-aminomethyl-7-deazaguanine (preQ1). This chain is NADPH-dependent 7-cyano-7-deazaguanine reductase, found in Streptococcus thermophilus (strain CNRZ 1066).